The chain runs to 94 residues: Cytochrome b-c1 complex subunit 8, mitochondrial (94 aa).

Topologically, residues G2–F49 are mitochondrial matrix. Residues R50–L80 traverse the membrane as a helical segment. At Y81 to V94 the chain is on the mitochondrial intermembrane side.

Belongs to the UQCRQ/QCR8 family. In terms of assembly, component of the ubiquinol-cytochrome c oxidoreductase (cytochrome b-c1 complex, complex III, CIII), a multisubunit enzyme composed of 10 subunits. The complex is composed of 3 respiratory subunits cytochrome b (COB), cytochrome c1 (CYT1) and Rieske protein (RIP1), 2 core protein subunits COR1 and QCR2, and 5 low-molecular weight protein subunits QCR6, QCR7, QCR8, QCR9 and QCR10. The complex exists as an obligatory dimer and forms supercomplexes (SCs) in the inner mitochondrial membrane with a monomer or a dimer of cytochrome c oxidase (complex IV, CIV), resulting in 2 different assemblies (supercomplexes III(2)IV and III(2)IV(2)).

The protein resides in the mitochondrion inner membrane. Component of the ubiquinol-cytochrome c oxidoreductase, a multisubunit transmembrane complex that is part of the mitochondrial electron transport chain which drives oxidative phosphorylation. The respiratory chain contains 3 multisubunit complexes succinate dehydrogenase (complex II, CII), ubiquinol-cytochrome c oxidoreductase (cytochrome b-c1 complex, complex III, CIII) and cytochrome c oxidase (complex IV, CIV), that cooperate to transfer electrons derived from NADH and succinate to molecular oxygen, creating an electrochemical gradient over the inner membrane that drives transmembrane transport and the ATP synthase. The cytochrome b-c1 complex catalyzes electron transfer from ubiquinol to cytochrome c, linking this redox reaction to translocation of protons across the mitochondrial inner membrane, with protons being carried across the membrane as hydrogens on the quinol. In the process called Q cycle, 2 protons are consumed from the matrix, 4 protons are released into the intermembrane space and 2 electrons are passed to cytochrome c. The polypeptide is Cytochrome b-c1 complex subunit 8, mitochondrial (QCR8) (Saccharomyces cerevisiae (strain ATCC 204508 / S288c) (Baker's yeast)).